Consider the following 902-residue polypeptide: Cytosolic 10-formyltetrahydrofolate dehydrogenase (902 aa).

The tract at residues 1 to 310 is hydrolase domain; the sequence is MKIAVIGQSL…PASQYFKTAD (310 aa). Residue 88–90 coordinates (6R)-10-formyltetrahydrofolate; the sequence is QFI. The Proton donor role is filled by His106. Asp142 contributes to the (6R)-10-formyltetrahydrofolate binding site. The Carrier domain maps to 318–395; that stretch reads EEEQKVSEEI…EFIQMVVRRM (78 aa). Ser354 is subject to O-(pantetheine 4'-phosphoryl)serine. Positions 417–902 are aldehyde dehydrogenase domain; that stretch reads TVKIPHQLFI…LKTKAVTIEY (486 aa). NADP(+) is bound by residues 571–573, 597–600, 630–635, 650–651, and 673–674; these read IPW, KPAQ, GSLIGQ, GS, and EL. Glu673 serves as the catalytic Proton acceptor. Cys707 functions as the Proton donor in the catalytic mechanism. NADP(+)-binding positions include Lys757 and 804-806; that span reads ESF.

This sequence in the N-terminal section; belongs to the GART family. The protein in the C-terminal section; belongs to the aldehyde dehydrogenase family. ALDH1L subfamily. Homotetramer. In terms of processing, phosphopantetheinylation at Ser-354 by AASDHPPT is required for the formyltetrahydrofolate dehydrogenase activity.

It is found in the cytoplasm. Its subcellular location is the cytosol. It catalyses the reaction (6R)-10-formyltetrahydrofolate + NADP(+) + H2O = (6S)-5,6,7,8-tetrahydrofolate + CO2 + NADPH + H(+). Its function is as follows. Cytosolic 10-formyltetrahydrofolate dehydrogenase that catalyzes the NADP(+)-dependent conversion of 10-formyltetrahydrofolate to tetrahydrofolate and carbon dioxide. May also have an NADP(+)-dependent aldehyde dehydrogenase activity towards formaldehyde, acetaldehyde, propionaldehyde, and benzaldehyde. The chain is Cytosolic 10-formyltetrahydrofolate dehydrogenase (aldh1l1) from Xenopus laevis (African clawed frog).